A 53-amino-acid polypeptide reads, in one-letter code: uncharacterized protein (53 aa).

2 consecutive transmembrane segments (helical) span residues leucine 3 to leucine 22 and alanine 26 to leucine 45.

The protein localises to the cell membrane. This is an uncharacterized protein from Bacillus subtilis (strain 168).